The primary structure comprises 81 residues: Small ribosomal subunit protein bS16 (81 aa).

The protein belongs to the bacterial ribosomal protein bS16 family.

The polypeptide is Small ribosomal subunit protein bS16 (Lachnospira eligens (strain ATCC 27750 / DSM 3376 / VPI C15-48 / C15-B4) (Eubacterium eligens)).